The following is a 140-amino-acid chain: Probable disulfide formation protein C 2 (140 aa).

A helical transmembrane segment spans residues 6-25 (KYHIAIAWTIATSAMLISLI). C35 and C38 are oxidised to a cystine. The next 2 membrane-spanning stretches (helical) occupy residues 40-59 (YQRMAMYPLVLILGIGMYRK) and 66-83 (YAFPFACIGLIISVYQIT). A disulfide bridge links C95 with C101. Residues 110–134 (GFISIPMLSFVGFLAIIILLYINQI) form a helical membrane-spanning segment.

This sequence belongs to the DsbB family. BdbC subfamily.

It localises to the cell membrane. Its function is as follows. Required for disulfide bond formation in some proteins. This chain is Probable disulfide formation protein C 2 (bdbC2), found in Bacillus anthracis.